We begin with the raw amino-acid sequence, 348 residues long: MMIQTAVAQAKTAPAGPGPWSIKDLVDLQYLDELMSIDNLDVWFCSLVGSIAIGLSGIFPLLVIPIEAGTALKTEAGCQKLKKLLSFAIGGLLGDVFLHLLPEAWAYTSSPGGSHRHYCTQGLWVIGGLMSFLTLEKMFPDEVGDPETKTSFQRTTSSSSDLSSQFSVSPQTNGICSNNNSDSKPKTDISPYTQPEKIKTSGYLNLLANCIDNFTHGLAVAGSFLVSRKVGFLTTFAILLHEIPHEVGDFAILLRAGFDRWKAARMQLSTALGGVLGACFALCSQSQHGAENATTWILPFTSGGFLYIALVNVVPDLLEETNPRNSLLQVLLLFSGIGVMALLSIAMD.

Topologically, residues 1–45 are cytoplasmic; the sequence is MMIQTAVAQAKTAPAGPGPWSIKDLVDLQYLDELMSIDNLDVWFC. The chain crosses the membrane as a helical span at residues 46 to 66; it reads SLVGSIAIGLSGIFPLLVIPI. Residues 67-83 are Lumenal-facing; sequence EAGTALKTEAGCQKLKK. Residues 84–104 traverse the membrane as a helical segment; the sequence is LLSFAIGGLLGDVFLHLLPEA. Residues 105–118 lie on the Cytoplasmic side of the membrane; sequence WAYTSSPGGSHRHY. The helical transmembrane segment at 119–139 threads the bilayer; sequence CTQGLWVIGGLMSFLTLEKMF. Residues 140–219 are Lumenal-facing; sequence PDEVGDPETK…CIDNFTHGLA (80 aa). The segment at 144 to 192 is disordered; sequence GDPETKTSFQRTTSSSSDLSSQFSVSPQTNGICSNNNSDSKPKTDISPY. The span at 149-169 shows a compositional bias: low complexity; it reads KTSFQRTTSSSSDLSSQFSVS. Residues 170-182 show a composition bias toward polar residues; that stretch reads PQTNGICSNNNSD. The chain crosses the membrane as a helical span at residues 220 to 240; it reads VAGSFLVSRKVGFLTTFAILL. The short motif at 241 to 246 is the XEXPHE-motif element; it reads HEIPHE. The Cytoplasmic segment spans residues 241–262; that stretch reads HEIPHEVGDFAILLRAGFDRWK. A helical membrane pass occupies residues 263-283; that stretch reads AARMQLSTALGGVLGACFALC. Residues 284 to 294 lie on the Lumenal side of the membrane; sequence SQSQHGAENAT. The chain crosses the membrane as a helical span at residues 295–315; sequence TWILPFTSGGFLYIALVNVVP. The Cytoplasmic segment spans residues 316–326; the sequence is DLLEETNPRNS. A helical transmembrane segment spans residues 327–347; the sequence is LLQVLLLFSGIGVMALLSIAM. Aspartate 348 is a topological domain (lumenal).

Belongs to the ZIP transporter (TC 2.A.5) family. In terms of assembly, homodimer.

It is found in the golgi apparatus membrane. The protein resides in the cytoplasmic vesicle membrane. It localises to the endoplasmic reticulum membrane. The catalysed reaction is Zn(2+)(in) = Zn(2+)(out). Its function is as follows. Functions as a zinc transporter transporting Zn(2+) from the Golgi apparatus to the cytosol and thus influences the zinc level at least in areas of the cytosol. This chain is Zinc transporter ZIP13, found in Danio rerio (Zebrafish).